Here is a 195-residue protein sequence, read N- to C-terminus: Recombination protein RecR (195 aa).

The segment at 53–68 (CPVCFNIDVKSPCSIC) adopts a C4-type zinc-finger fold. The Toprim domain maps to 76–171 (QLLCIVEELG…KVTRLACGIP (96 aa)).

Belongs to the RecR family.

Functionally, may play a role in DNA repair. It seems to be involved in an RecBC-independent recombinational process of DNA repair. It may act with RecF and RecO. The protein is Recombination protein RecR of Ehrlichia chaffeensis (strain ATCC CRL-10679 / Arkansas).